Here is a 473-residue protein sequence, read N- to C-terminus: Glycosyl hydrolase family 109 protein 2 (473 aa).

The tat-type signal signal peptide spans 1-31 (MSIFSSRRQFLKSLGLAAGAAAAGNALPGKA). Residues 77-78 (GR), D99, 148-151 (WSSH), 168-169 (EV), and N197 contribute to the NAD(+) site. Substrate-binding positions include Y226, R244, 256 to 259 (YPTH), and Y339. Position 256 (Y256) interacts with NAD(+).

The protein belongs to the Gfo/Idh/MocA family. Glycosyl hydrolase 109 subfamily. Requires NAD(+) as cofactor. Predicted to be exported by the Tat system. The position of the signal peptide cleavage has not been experimentally proven.

Glycosidase. In Akkermansia muciniphila (strain ATCC BAA-835 / DSM 22959 / JCM 33894 / BCRC 81048 / CCUG 64013 / CIP 107961 / Muc), this protein is Glycosyl hydrolase family 109 protein 2.